The chain runs to 287 residues: tRNA selenocysteine 1-associated protein 1 (287 aa).

RRM domains follow at residues 3-86 (ASLW…YATY) and 96-175 (YSLF…VAIP).

The protein belongs to the RRM TRSPAP family. Component of the tRNA(Sec) complex composed at least of EEFSEC, SECISBP2, SEPHS1, SEPSECS, TRNAU1AP and tRNA(Sec). Associates with mRNP and/or polysomes. Found in a complex with tRNA(Sec). Interacts with SEPSECS. Ubiquitous.

Its subcellular location is the nucleus. The protein resides in the cytoplasm. Its function is as follows. Involved in the early steps of selenocysteine biosynthesis and tRNA(Sec) charging to the later steps resulting in the cotranslational incorporation of selenocysteine into selenoproteins. Stabilizes the SECISBP2, EEFSEC and tRNA(Sec) complex. May be involved in the methylation of tRNA(Sec). Enhances efficiency of selenoproteins synthesis. The polypeptide is tRNA selenocysteine 1-associated protein 1 (Trnau1ap) (Rattus norvegicus (Rat)).